Here is a 363-residue protein sequence, read N- to C-terminus: Probable F-box protein At4g22165 (363 aa).

The region spanning 7-56 (PNTWSELPLDLLNLVFKRLSLVNFQRAKSVCSTRYSVSRQCVPERQIALL) is the F-box domain.

In Arabidopsis thaliana (Mouse-ear cress), this protein is Probable F-box protein At4g22165.